A 162-amino-acid polypeptide reads, in one-letter code: Cyclic pyranopterin monophosphate synthase (162 aa).

Residues 75–77 (LCH) and 113–114 (ME) each bind substrate. The active site involves Asp128.

Belongs to the MoaC family. As to quaternary structure, homohexamer; trimer of dimers.

It catalyses the reaction (8S)-3',8-cyclo-7,8-dihydroguanosine 5'-triphosphate = cyclic pyranopterin phosphate + diphosphate. It functions in the pathway cofactor biosynthesis; molybdopterin biosynthesis. Catalyzes the conversion of (8S)-3',8-cyclo-7,8-dihydroguanosine 5'-triphosphate to cyclic pyranopterin monophosphate (cPMP). In Burkholderia cenocepacia (strain HI2424), this protein is Cyclic pyranopterin monophosphate synthase.